The following is a 418-amino-acid chain: Gamma-glutamyl phosphate reductase (418 aa).

Belongs to the gamma-glutamyl phosphate reductase family.

It localises to the cytoplasm. The enzyme catalyses L-glutamate 5-semialdehyde + phosphate + NADP(+) = L-glutamyl 5-phosphate + NADPH + H(+). The protein operates within amino-acid biosynthesis; L-proline biosynthesis; L-glutamate 5-semialdehyde from L-glutamate: step 2/2. Catalyzes the NADPH-dependent reduction of L-glutamate 5-phosphate into L-glutamate 5-semialdehyde and phosphate. The product spontaneously undergoes cyclization to form 1-pyrroline-5-carboxylate. The chain is Gamma-glutamyl phosphate reductase from Colwellia psychrerythraea (strain 34H / ATCC BAA-681) (Vibrio psychroerythus).